The primary structure comprises 57 residues: UPF0509 protein YciZ (57 aa).

It belongs to the UPF0509 family.

In Escherichia coli O157:H7, this protein is UPF0509 protein YciZ (yciZ).